Here is a 22-residue protein sequence, read N- to C-terminus: 2.39 kDa venom peptide (22 aa).

Post-translationally, contains 2 disulfide bonds. Expressed by the venom gland.

The protein resides in the secreted. In terms of biological role, not lethal to mice by intraperitoneal or intracerebroventricular injections in doses up to 100 micrograms. The sequence is that of 2.39 kDa venom peptide from Heterometrus spinifer (Asia giant forest scorpion).